We begin with the raw amino-acid sequence, 177 residues long: Bifunctional protein PyrR (177 aa).

The PRPP-binding motif lies at 101–113; it reads IILIDDVLYTGRT.

It belongs to the purine/pyrimidine phosphoribosyltransferase family. PyrR subfamily.

The enzyme catalyses UMP + diphosphate = 5-phospho-alpha-D-ribose 1-diphosphate + uracil. Regulates the transcription of the pyrimidine nucleotide (pyr) operon in response to exogenous pyrimidines. In terms of biological role, also displays a weak uracil phosphoribosyltransferase activity which is not physiologically significant. The polypeptide is Bifunctional protein PyrR (Endomicrobium trichonymphae).